We begin with the raw amino-acid sequence, 287 residues long: L-cysteine S-thiosulfotransferase subunit SoxA (287 aa).

Residues 1-26 form the signal peptide; the sequence is MKTMTGRLVAAALVCGGAFSGAAVSA. One can recognise a Cytochrome c domain in the interval 74 to 168; sequence DDFENSGMVF…AMVALIASVS (95 aa). Positions 102, 105, 106, 140, 203, 206, and 207 each coordinate heme c. A substrate-binding site is contributed by arginine 244. Residue cysteine 248 coordinates heme c. Residue cysteine 248 is the Cysteine persulfide intermediate of the active site.

Belongs to the SoxA family. As to quaternary structure, heterodimer of SoxA and SoxX. Heme c is required as a cofactor. Cysteine persulfide at Cys-248.

The protein resides in the periplasm. The enzyme catalyses L-cysteinyl-[SoxY protein] + thiosulfate + 2 Fe(III)-[cytochrome c] = S-sulfosulfanyl-L-cysteinyl-[SoxY protein] + 2 Fe(II)-[cytochrome c] + 2 H(+). It catalyses the reaction S-sulfanyl-L-cysteinyl-[SoxY protein] + thiosulfate + 2 Fe(III)-[cytochrome c] = S-(2-sulfodisulfanyl)-L-cysteinyl-[SoxY protein] + 2 Fe(II)-[cytochrome c] + 2 H(+). Functionally, C-type diheme cytochrome, which is part of the SoxAX cytochrome complex involved in sulfur oxidation. The SoxAX complex catalyzes the formation of a heterodisulfide bond between the conserved cysteine residue on a sulfur carrier SoxYZ complex subunit SoxY and thiosulfate or other inorganic sulfur substrates. This leads to the liberation of two electrons, which may be transferred from the SoxAX complex to another cytochrome c and which then may be used for reductive CO(2) fixation. The polypeptide is L-cysteine S-thiosulfotransferase subunit SoxA (Rhodovulum sulfidophilum (Rhodobacter sulfidophilus)).